We begin with the raw amino-acid sequence, 210 residues long: MRKRQQSQNEGTQAVSQAPGNQRPNNTCCFCWCCCCSCSCLTVRNEERGDSSGRSPHTTKMESIQVLEECQNPTADEVLSWSQNFDKMMKTPAGRNLFREFLRTEYSEENLLFWLACEDLKKEQNKKAVEEKARMIYEDYISILSPKEVSLDSRVREVINRSLLDPSPHMYEDAQLQIYTLMHRDSFPRFLNSQIYKAFVESTTSCTSES.

A disordered region spans residues 1–21 (MRKRQQSQNEGTQAVSQAPGN). The region spanning 84–200 (NFDKMMKTPA…LNSQIYKAFV (117 aa)) is the RGS domain. Y137 carries the phosphotyrosine modification.

As to quaternary structure, interacts with GNAI1 and GNAQ. Interacts with GNAZ and GNAI2. Interacts with OPRM1. Forms a complex with mu-opioid receptors and G(alpha)z/i2 subunits, including GNAZ and GNAI2; the formation of this complex results in mu-opioid receptor desensitization. Interacts with HINT1. Post-translationally, N- and O-glycosylated in synapsomal membranes. Serine phosphorylated in synapsomal membranes. In terms of processing, sumoylated with SUMO1 and SUM02 in synaptosomes. The sumoylated forms act as a scaffold for sequestering mu-opioid receptor-activated G(alpha) subunits. Desumoylated by HINT1. Detected in brain (at protein level). Highly expressed in the hypothalamus, periaqueductal gray matter, and pons-medulla. Lower levels in the thalamus, cortex and spinal cord. Weak expression in the striatum and cerebellum.

It is found in the membrane. The protein localises to the synapse. Its subcellular location is the synaptosome. The protein resides in the nucleus. It localises to the cytoplasm. Functionally, regulates G protein-coupled receptor signaling cascades, including signaling via muscarinic acetylcholine receptor CHRM2 and dopamine receptor DRD2. Inhibits signal transduction by increasing the GTPase activity of G protein alpha subunits, thereby driving them into their inactive GDP-bound form. Binds selectively to GNAZ and GNAI2 subunits, accelerates their GTPase activity and regulates their signaling activities. Negatively regulates mu-opioid receptor-mediated activation of the G-proteins. In Mus musculus (Mouse), this protein is Regulator of G-protein signaling 17 (Rgs17).